The chain runs to 258 residues: Octanoyltransferase (258 aa).

The region spanning 42 to 226 (NLGADTLLLL…AVVAALDGAL (185 aa)) is the BPL/LPL catalytic domain. Substrate contacts are provided by residues 80–87 (RGGKITWH), 156–158 (AIG), and 169–171 (GFS). C187 serves as the catalytic Acyl-thioester intermediate.

The protein belongs to the LipB family.

The protein resides in the cytoplasm. It carries out the reaction octanoyl-[ACP] + L-lysyl-[protein] = N(6)-octanoyl-L-lysyl-[protein] + holo-[ACP] + H(+). It functions in the pathway protein modification; protein lipoylation via endogenous pathway; protein N(6)-(lipoyl)lysine from octanoyl-[acyl-carrier-protein]: step 1/2. Its function is as follows. Catalyzes the transfer of endogenously produced octanoic acid from octanoyl-acyl-carrier-protein onto the lipoyl domains of lipoate-dependent enzymes. Lipoyl-ACP can also act as a substrate although octanoyl-ACP is likely to be the physiological substrate. In Rhodococcus opacus (strain B4), this protein is Octanoyltransferase.